The sequence spans 249 residues: Flagellar L-ring protein (249 aa).

The N-terminal stretch at 1–25 (MSRLRTSHALRTAAALVAVGCLASG) is a signal peptide. Cys26 carries the N-palmitoyl cysteine lipid modification. Cys26 carries the S-diacylglycerol cysteine lipid modification.

This sequence belongs to the FlgH family. In terms of assembly, the basal body constitutes a major portion of the flagellar organelle and consists of four rings (L,P,S, and M) mounted on a central rod.

The protein resides in the cell outer membrane. It localises to the bacterial flagellum basal body. Assembles around the rod to form the L-ring and probably protects the motor/basal body from shearing forces during rotation. In Afipia carboxidovorans (strain ATCC 49405 / DSM 1227 / KCTC 32145 / OM5) (Oligotropha carboxidovorans), this protein is Flagellar L-ring protein.